We begin with the raw amino-acid sequence, 236 residues long: 7-cyano-7-deazaguanine synthase (236 aa).

7-17 (CSGGLDSVSLA) lines the ATP pocket. Residues cysteine 185, cysteine 193, cysteine 196, and cysteine 199 each coordinate Zn(2+).

It belongs to the QueC family. Zn(2+) serves as cofactor.

The enzyme catalyses 7-carboxy-7-deazaguanine + NH4(+) + ATP = 7-cyano-7-deazaguanine + ADP + phosphate + H2O + H(+). Its pathway is purine metabolism; 7-cyano-7-deazaguanine biosynthesis. Its function is as follows. Catalyzes the ATP-dependent conversion of 7-carboxy-7-deazaguanine (CDG) to 7-cyano-7-deazaguanine (preQ(0)). The chain is 7-cyano-7-deazaguanine synthase from Sinorhizobium fredii (strain NBRC 101917 / NGR234).